Reading from the N-terminus, the 593-residue chain is Aspartate--tRNA ligase (593 aa).

Glu-173 serves as a coordination point for L-aspartate. The interval 197-200 (QLFK) is aspartate. Arg-219 contacts L-aspartate. ATP-binding positions include 219 to 221 (RDE) and Gln-228. L-aspartate is bound at residue His-448. Glu-482 serves as a coordination point for ATP. Arg-489 contacts L-aspartate. Residue 534-537 (GLDR) coordinates ATP.

The protein belongs to the class-II aminoacyl-tRNA synthetase family. Type 1 subfamily. In terms of assembly, homodimer.

It is found in the cytoplasm. It carries out the reaction tRNA(Asp) + L-aspartate + ATP = L-aspartyl-tRNA(Asp) + AMP + diphosphate. Its function is as follows. Catalyzes the attachment of L-aspartate to tRNA(Asp) in a two-step reaction: L-aspartate is first activated by ATP to form Asp-AMP and then transferred to the acceptor end of tRNA(Asp). In Shewanella denitrificans (strain OS217 / ATCC BAA-1090 / DSM 15013), this protein is Aspartate--tRNA ligase.